The primary structure comprises 489 residues: Probable capsid protein (489 aa).

Over residues arginine 87–glutamine 101 the composition is skewed to basic and acidic residues. Residues arginine 87–isoleucine 111 form a disordered region. A Nuclear localization signal motif is present at residues arginine 107 to lysine 110. The CCHC-type zinc-finger motif lies at cysteine 409 to asparagine 426. The tract at residues glutamate 466 to phenylalanine 489 is disordered.

The protein belongs to the caulimoviridae capsid protein family. As to quaternary structure, interacts (via nuclear localization signal) with host importin alpha.

The protein localises to the virion. It localises to the host nucleus. Self assembles to form an icosahedral capsid, about 50 nm in diameter, nm, composed of 420 subunits of the viral capsid protein. The capsid encapsulates the genomic dsDNA. Following virus entry into host cell, provides nuclear import of the viral genome. Virus particles do not enter the nucleus, but dock at the nuclear membrane through the interaction with host importins. The protein is Probable capsid protein of Scrophularia californica (California bee plant).